The primary structure comprises 269 residues: Xyloglucan endotransglucosylase/hydrolase protein 24 (269 aa).

Residues 1–21 (MSPFKIFFFTTLLVAAFSVSA) form the signal peptide. The region spanning 22 to 212 (ADFNTDVNVA…WSKAPFMASY (191 aa)) is the GH16 domain. The Nucleophile role is filled by Glu98. Glu102 functions as the Proton donor in the catalytic mechanism. A xyloglucan-binding site is contributed by Glu102. An N-linked (GlcNAc...) asparagine glycan is attached at Asn106. Xyloglucan is bound by residues 115 to 117 (HTN), 125 to 127 (DKE), 191 to 192 (DW), Gly196, and Arg256. Cysteines 251 and 265 form a disulfide.

It belongs to the glycosyl hydrolase 16 family. XTH group 2 subfamily. Post-translationally, contains at least one intrachain disulfide bond essential for its enzymatic activity. In terms of processing, N-glycosylated; essential for its enzymatic activity. In terms of tissue distribution, highly expressed. Predominantly expressed in stems. Expressed in shoot apical meristems, also found in seedlings and meristems.

Its subcellular location is the secreted. The protein localises to the cell wall. The protein resides in the extracellular space. It localises to the apoplast. It catalyses the reaction breaks a beta-(1-&gt;4) bond in the backbone of a xyloglucan and transfers the xyloglucanyl segment on to O-4 of the non-reducing terminal glucose residue of an acceptor, which can be a xyloglucan or an oligosaccharide of xyloglucan.. Its function is as follows. Catalyzes xyloglucan endohydrolysis (XEH) and/or endotransglycosylation (XET). Cleaves and religates xyloglucan polymers, an essential constituent of the primary cell wall, and thereby participates in cell wall construction of growing tissues. May be required during development to modify the walls of cells under mechanical stress. This Arabidopsis thaliana (Mouse-ear cress) protein is Xyloglucan endotransglucosylase/hydrolase protein 24 (XTH24).